Reading from the N-terminus, the 182-residue chain is Protein Syd (182 aa).

Belongs to the Syd family.

It localises to the cell inner membrane. Functionally, interacts with the SecY protein in vivo. May bind preferentially to an uncomplexed state of SecY, thus functioning either as a chelating agent for excess SecY in the cell or as a regulatory factor that negatively controls the translocase function. In Aeromonas salmonicida (strain A449), this protein is Protein Syd.